The sequence spans 182 residues: FMN reductase (NADH) RutF (182 aa).

The protein belongs to the non-flavoprotein flavin reductase family. RutF subfamily.

The catalysed reaction is FMNH2 + NAD(+) = FMN + NADH + 2 H(+). Functionally, catalyzes the reduction of FMN to FMNH2 which is used to reduce pyrimidine by RutA via the Rut pathway. In Yersinia enterocolitica serotype O:8 / biotype 1B (strain NCTC 13174 / 8081), this protein is FMN reductase (NADH) RutF.